We begin with the raw amino-acid sequence, 68 residues long: Pleurocidin (68 aa).

An N-terminal signal peptide occupies residues 1–22 (MKFTATFLMIAIFVLMVEPGEC). Residues 48 to 68 (GDKQELNKRAVDEDPNVIVFE) constitute a propeptide that is removed on maturation.

Belongs to the pleurocidin family. As to expression, goblet cells.

It is found in the secreted. In terms of biological role, antimicrobial peptide with potent activity against Gram-positive and Gram-negative bacteria. Activity against E.coli and B.subtilis. Weaker activity against L.mucor, s.marcescens and P.aeruginosa. May play a role in innate host defense. The polypeptide is Pleurocidin (ple2) (Pseudopleuronectes americanus (Winter flounder)).